Consider the following 301-residue polypeptide: UDP-N-acetylenolpyruvoylglucosamine reductase (301 aa).

An FAD-binding PCMH-type domain is found at 26-193; it reads KTGGPAQYLA…VSATFGLEPG (168 aa). The active site involves Arg-172. The Proton donor role is filled by Ser-222. Glu-292 is a catalytic residue.

The protein belongs to the MurB family. FAD serves as cofactor.

The protein resides in the cytoplasm. The enzyme catalyses UDP-N-acetyl-alpha-D-muramate + NADP(+) = UDP-N-acetyl-3-O-(1-carboxyvinyl)-alpha-D-glucosamine + NADPH + H(+). The protein operates within cell wall biogenesis; peptidoglycan biosynthesis. Cell wall formation. The chain is UDP-N-acetylenolpyruvoylglucosamine reductase from Lactobacillus johnsonii (strain CNCM I-12250 / La1 / NCC 533).